We begin with the raw amino-acid sequence, 81 residues long: Defensin-like protein 45 (81 aa).

The first 27 residues, 1–27 (MAITKTSATFVLLIILAASLSNFNVLA), serve as a signal peptide directing secretion. 4 disulfide bridges follow: C40/C79, C44/C67, C53/C77, and C57/C78.

This sequence belongs to the DEFL family.

It localises to the secreted. The sequence is that of Defensin-like protein 45 from Arabidopsis thaliana (Mouse-ear cress).